Here is an 860-residue protein sequence, read N- to C-terminus: Ubiquitin carboxyl-terminal hydrolase 13 (860 aa).

The UBP-type; degenerate zinc finger occupies 168–276 (QVSRHARSLR…EHLLHFGIDM (109 aa)). Zn(2+) is bound by residues Cys-192, Cys-195, Cys-212, and His-225. Residues 318–857 (TGIKNLGNSC…LGYMYFYRRL (540 aa)) form the USP domain. Cys-327 (nucleophile) is an active-site residue. The disordered stretch occupies residues 611–636 (DLTPPIVIPEDTRDSSTNNSLESPEI). UBA domains are found at residues 635-676 (EIDE…IIAH) and 710-750 (QPPE…IFTH). Residues 755–768 (DESEAMSDTADTEP) are compositionally biased toward acidic residues. Positions 755 to 795 (DESEAMSDTADTEPNDNSFSNANAHTDSSLSPDQDLSSPRV) are disordered. Over residues 769 to 780 (NDNSFSNANAHT) the composition is skewed to polar residues. The span at 781-793 (DSSLSPDQDLSSP) shows a compositional bias: low complexity. The active-site Proton acceptor is the His-819.

The protein belongs to the peptidase C19 family.

The enzyme catalyses Thiol-dependent hydrolysis of ester, thioester, amide, peptide and isopeptide bonds formed by the C-terminal Gly of ubiquitin (a 76-residue protein attached to proteins as an intracellular targeting signal).. With respect to regulation, specifically inhibited by spautin-1 (specific and potent autophagy inhibitor-1), a derivative of MBCQ that binds to usp13 and inhibits deubiquitinase activity. Its function is as follows. Deubiquitinase that mediates deubiquitination of target proteins and is involved in various processes such as autophagy and endoplasmic reticulum-associated degradation (ERAD). The chain is Ubiquitin carboxyl-terminal hydrolase 13 (usp13) from Danio rerio (Zebrafish).